The sequence spans 209 residues: ATP-dependent Clp protease proteolytic subunit (209 aa).

The active-site Nucleophile is the Ser106. His131 is an active-site residue.

Belongs to the peptidase S14 family. Fourteen ClpP subunits assemble into 2 heptameric rings which stack back to back to give a disk-like structure with a central cavity, resembling the structure of eukaryotic proteasomes.

The protein resides in the cytoplasm. The catalysed reaction is Hydrolysis of proteins to small peptides in the presence of ATP and magnesium. alpha-casein is the usual test substrate. In the absence of ATP, only oligopeptides shorter than five residues are hydrolyzed (such as succinyl-Leu-Tyr-|-NHMec, and Leu-Tyr-Leu-|-Tyr-Trp, in which cleavage of the -Tyr-|-Leu- and -Tyr-|-Trp bonds also occurs).. Functionally, cleaves peptides in various proteins in a process that requires ATP hydrolysis. Has a chymotrypsin-like activity. Plays a major role in the degradation of misfolded proteins. The sequence is that of ATP-dependent Clp protease proteolytic subunit from Brucella melitensis biotype 2 (strain ATCC 23457).